A 354-amino-acid polypeptide reads, in one-letter code: Polyribonucleotide 5'-hydroxyl-kinase PF0112 (354 aa).

36-43 is a binding site for ATP; it reads GDVDTGKT.

The cofactor is a divalent metal cation.

It catalyses the reaction a 5'-end dephospho-2'-deoxyribonucleoside-DNA + ATP = a 5'-end 5'-phospho-2'-deoxyribonucleoside-DNA + ADP + H(+). The catalysed reaction is a 5'-end dephospho-ribonucleoside-RNA + ATP = a 5'-end 5'-phospho-ribonucleoside-RNA + ADP + H(+). In terms of biological role, polynucleotide kinase that can phosphorylate the 5'-hydroxyl groups of both single-stranded RNA (ssRNA) and single-stranded DNA (ssDNA). Exhibits a strong preference for ssRNA. The chain is Polyribonucleotide 5'-hydroxyl-kinase PF0112 from Pyrococcus furiosus (strain ATCC 43587 / DSM 3638 / JCM 8422 / Vc1).